The chain runs to 211 residues: Mitotic spindle assembly checkpoint protein MAD2B (211 aa).

An HORMA domain is found at 13-203 (QVVADVLSEF…SDILKMQLYV (191 aa)). The mediates interaction with REV1 and REV3L and homodimerization stretch occupies residues 21–155 (EFLEVAVHLI…FTVLVHTREA (135 aa)).

Homooligomer. Heterodimer with REV3L. This dimer forms the minimal DNA polymerase zeta complex (Pol-zeta2), with REV3L bearing DNA polymerase catalytic activity, although its activity is very low in this context. Component of the tetrameric Pol-zeta complex (Pol-zeta4), which consists of REV3L, MAD2L2, POLD2 and POLD3; Pol-zeta4 is the fully active form of DNA polymerase zeta. Component of the shieldin complex, consisting of SHLD1, SHLD2, SHLD3 and MAD2L2/REV7. Within the complex, SHLD2 forms a scaffold which interacts with a SHLD3-MAD2L2 subcomplex via its N-terminus, and with SHLD1 via its C-terminus. Interacts with REV1. Interacts with ADAM9. Interacts with CHAMP1. Interacts with FZR1 (in complex with the anaphase promoting complex APC). May interact with CDC20. Interacts with RAN. Interacts with ELK1; the interaction is direct and recruits MAD2L2 to ELK1-specific promoters. May interact with the JNK kinases MAPK8 and/or MAPK9 to stimulate ELK1 phosphorylation and transcriptional activity upon DNA damage. Interacts with TCF7L2; prevents its binding to promoters and negatively modulates its transcriptional activity. Interacts with YY1AP1. Interacts with PRCC; the interaction is direct. Interacts with POGZ. Interacts with ASTE1.

It is found in the nucleus. The protein resides in the cytoplasm. Its subcellular location is the cytoskeleton. It localises to the spindle. Its function is as follows. Adapter protein able to interact with different proteins and involved in different biological processes. Mediates the interaction between the error-prone DNA polymerase zeta catalytic subunit REV3L and the inserter polymerase REV1, thereby mediating the second polymerase switching in translesion DNA synthesis. Translesion DNA synthesis releases the replication blockade of replicative polymerases, stalled in presence of DNA lesions. Component of the shieldin complex, which plays an important role in repair of DNA double-stranded breaks (DSBs). During G1 and S phase of the cell cycle, the complex functions downstream of TP53BP1 to promote non-homologous end joining (NHEJ) and suppress DNA end resection. Mediates various NHEJ-dependent processes including immunoglobulin class-switch recombination, and fusion of unprotected telomeres. May also regulate another aspect of cellular response to DNA damage through regulation of the JNK-mediated phosphorylation and activation of the transcriptional activator ELK1. Inhibits the FZR1- and probably CDC20-mediated activation of the anaphase promoting complex APC thereby regulating progression through the cell cycle. Regulates TCF7L2-mediated gene transcription and may play a role in epithelial-mesenchymal transdifferentiation. This is Mitotic spindle assembly checkpoint protein MAD2B (Mad2l2) from Rattus norvegicus (Rat).